We begin with the raw amino-acid sequence, 137 residues long: Large-conductance mechanosensitive channel (137 aa).

2 helical membrane passes run 9 to 29 and 79 to 99; these read AFAV…GAAF and IQTI…VKAI.

It belongs to the MscL family. Homopentamer.

The protein localises to the cell inner membrane. Its function is as follows. Channel that opens in response to stretch forces in the membrane lipid bilayer. May participate in the regulation of osmotic pressure changes within the cell. This Pseudomonas paraeruginosa (strain DSM 24068 / PA7) (Pseudomonas aeruginosa (strain PA7)) protein is Large-conductance mechanosensitive channel.